The primary structure comprises 636 residues: Capsid vertex component 2 (636 aa).

An interaction with major capsid protein/MCP region spans residues 1–48; it reads MSLLHTFWRLPVAVFFEPHEENVLRCPERVLRRLLEDAAVAMRGGGWR. Residues 97–125 form a disordered region; that stretch reads DEGPSPRTLLQPPCRPRSSSPGTGVAGAS.

The protein belongs to the herpesviridae CVC2 protein family. In terms of assembly, heterodimerizes with CVC1. Interacts with major capsid protein/MCP and triplex capsid protein 1/TRX1 at the pentamer vertices. Interacts with the large tegument protein/LTP.

Its subcellular location is the virion. It is found in the host nucleus. Functionally, capsid vertex-specific component that plays a role during viral DNA encapsidation, assuring correct genome cleavage and presumably stabilizing capsids that contain full-length viral genomes. Participates in the interaction between the capsid and the tegument through interaction with the large tegument protein/LTP. This chain is Capsid vertex component 2, found in Homo sapiens (Human).